Consider the following 572-residue polypeptide: Potassium-transporting ATPase potassium-binding subunit (572 aa).

Transmembrane regions (helical) follow at residues 5–25, 71–91, 97–117, 142–162, 188–208, 258–278, 292–312, 387–407, 422–442, 500–520, and 548–568; these read LAAGLQIGFVILALAIAYVPL, VGYTLSLLGFSFASVIFLYVL, VLPLSGGLGAVSPAVAFNTAV, GLAVQNFVSAAVGLTVAVALI, ILLPLSFAVALILLSQGTIQS, PTPLSNVIEILAILIIPVCLT, LTVLSVMGTLFGGMLALVTWA, GLYGILVLAIIAVFVGGLLVG, ITMAALSVLVMPALVLVGTGI, LGMAMLLGRFLPIIFTLALAG, and GTVLLVAALTFFPALALGPIA.

The protein belongs to the KdpA family. In terms of assembly, the system is composed of three essential subunits: KdpA, KdpB and KdpC.

It is found in the cell membrane. Functionally, part of the high-affinity ATP-driven potassium transport (or Kdp) system, which catalyzes the hydrolysis of ATP coupled with the electrogenic transport of potassium into the cytoplasm. This subunit binds the extracellular potassium ions and delivers the ions to the membrane domain of KdpB through an intramembrane tunnel. The polypeptide is Potassium-transporting ATPase potassium-binding subunit (Mycobacteroides abscessus (strain ATCC 19977 / DSM 44196 / CCUG 20993 / CIP 104536 / JCM 13569 / NCTC 13031 / TMC 1543 / L948) (Mycobacterium abscessus)).